The following is a 254-amino-acid chain: Aspartate/glutamate leucyltransferase (254 aa).

The protein belongs to the R-transferase family. Bpt subfamily.

Its subcellular location is the cytoplasm. The catalysed reaction is N-terminal L-glutamyl-[protein] + L-leucyl-tRNA(Leu) = N-terminal L-leucyl-L-glutamyl-[protein] + tRNA(Leu) + H(+). It catalyses the reaction N-terminal L-aspartyl-[protein] + L-leucyl-tRNA(Leu) = N-terminal L-leucyl-L-aspartyl-[protein] + tRNA(Leu) + H(+). Its function is as follows. Functions in the N-end rule pathway of protein degradation where it conjugates Leu from its aminoacyl-tRNA to the N-termini of proteins containing an N-terminal aspartate or glutamate. The sequence is that of Aspartate/glutamate leucyltransferase from Xylella fastidiosa (strain 9a5c).